Here is a 435-residue protein sequence, read N- to C-terminus: NADH-quinone oxidoreductase subunit D (435 aa).

Belongs to the complex I 49 kDa subunit family. In terms of assembly, NDH-1 is composed of 14 different subunits. Subunits NuoB, C, D, E, F, and G constitute the peripheral sector of the complex.

It localises to the cell inner membrane. It catalyses the reaction a quinone + NADH + 5 H(+)(in) = a quinol + NAD(+) + 4 H(+)(out). Functionally, NDH-1 shuttles electrons from NADH, via FMN and iron-sulfur (Fe-S) centers, to quinones in the respiratory chain. The immediate electron acceptor for the enzyme in this species is believed to be ubiquinone. Couples the redox reaction to proton translocation (for every two electrons transferred, four hydrogen ions are translocated across the cytoplasmic membrane), and thus conserves the redox energy in a proton gradient. The sequence is that of NADH-quinone oxidoreductase subunit D from Xylella fastidiosa (strain M12).